We begin with the raw amino-acid sequence, 192 residues long: Protein GrpE (192 aa).

The tract at residues 1–34 is disordered; the sequence is MSSKEQKTPNEQVSEEMENTAEQQVEATQETGEC. Polar residues predominate over residues 20 to 31; the sequence is TAEQQVEATQET.

It belongs to the GrpE family. Homodimer.

It is found in the cytoplasm. Its function is as follows. Participates actively in the response to hyperosmotic and heat shock by preventing the aggregation of stress-denatured proteins, in association with DnaK and GrpE. It is the nucleotide exchange factor for DnaK and may function as a thermosensor. Unfolded proteins bind initially to DnaJ; upon interaction with the DnaJ-bound protein, DnaK hydrolyzes its bound ATP, resulting in the formation of a stable complex. GrpE releases ADP from DnaK; ATP binding to DnaK triggers the release of the substrate protein, thus completing the reaction cycle. Several rounds of ATP-dependent interactions between DnaJ, DnaK and GrpE are required for fully efficient folding. The polypeptide is Protein GrpE (Yersinia pestis).